The chain runs to 141 residues: Hemoglobin subunit alpha (141 aa).

Residues 1-141 (VLSPADKTNV…VSTVLTSKYR (141 aa)) enclose the Globin domain. At Ser-3 the chain carries Phosphoserine. An N6-succinyllysine modification is found at Lys-7. Thr-8 carries the phosphothreonine modification. Lys-11 is modified (N6-succinyllysine). At Lys-16 the chain carries N6-acetyllysine; alternate. An N6-succinyllysine; alternate modification is found at Lys-16. At Tyr-24 the chain carries Phosphotyrosine. Position 35 is a phosphoserine (Ser-35). Lys-40 is subject to N6-succinyllysine. Ser-49 carries the phosphoserine modification. Residue His-58 coordinates O2. His-87 lines the heme b pocket. Ser-102 carries the phosphoserine modification. Phosphothreonine is present on Thr-108. Ser-124 and Ser-131 each carry phosphoserine. Thr-134 and Thr-137 each carry phosphothreonine. The residue at position 138 (Ser-138) is a Phosphoserine.

This sequence belongs to the globin family. As to quaternary structure, heterotetramer of two alpha chains and two beta chains. Red blood cells.

Functionally, involved in oxygen transport from the lung to the various peripheral tissues. Hemopressin acts as an antagonist peptide of the cannabinoid receptor CNR1. Hemopressin-binding efficiently blocks cannabinoid receptor CNR1 and subsequent signaling. This is Hemoglobin subunit alpha (HBA) from Gorilla gorilla gorilla (Western lowland gorilla).